The primary structure comprises 114 residues: UPF0145 protein YG5714_0873 (114 aa).

Belongs to the UPF0145 family.

This Saccharolobus islandicus (strain Y.G.57.14 / Yellowstone #1) (Sulfolobus islandicus) protein is UPF0145 protein YG5714_0873.